The chain runs to 428 residues: Adenylosuccinate synthetase (428 aa).

Residues 12–18 (GDEGKGK) and 40–42 (GHT) each bind GTP. The active-site Proton acceptor is D13. Residues D13 and G40 each contribute to the Mg(2+) site. Residues 13-16 (DEGK), 38-41 (NAGH), T131, R145, Q226, T241, and R305 contribute to the IMP site. Catalysis depends on H41, which acts as the Proton donor. 301 to 307 (ATTGRKR) contacts substrate. Residues R307, 333 to 335 (KLD), and 415 to 417 (SVG) each bind GTP.

The protein belongs to the adenylosuccinate synthetase family. As to quaternary structure, homodimer. The cofactor is Mg(2+).

It is found in the cytoplasm. The catalysed reaction is IMP + L-aspartate + GTP = N(6)-(1,2-dicarboxyethyl)-AMP + GDP + phosphate + 2 H(+). Its pathway is purine metabolism; AMP biosynthesis via de novo pathway; AMP from IMP: step 1/2. Functionally, plays an important role in the de novo pathway of purine nucleotide biosynthesis. Catalyzes the first committed step in the biosynthesis of AMP from IMP. The polypeptide is Adenylosuccinate synthetase (Nitratidesulfovibrio vulgaris (strain DSM 19637 / Miyazaki F) (Desulfovibrio vulgaris)).